A 314-amino-acid polypeptide reads, in one-letter code: tRNA pseudouridine synthase B (314 aa).

Catalysis depends on Asp-41, which acts as the Nucleophile.

This sequence belongs to the pseudouridine synthase TruB family. Type 1 subfamily.

It catalyses the reaction uridine(55) in tRNA = pseudouridine(55) in tRNA. Its function is as follows. Responsible for synthesis of pseudouridine from uracil-55 in the psi GC loop of transfer RNAs. This is tRNA pseudouridine synthase B from Prochlorococcus marinus (strain NATL2A).